The chain runs to 196 residues: ATP-dependent Clp protease proteolytic subunit (196 aa).

Serine 96 serves as the catalytic Nucleophile. Residue histidine 121 is part of the active site.

This sequence belongs to the peptidase S14 family. Fourteen ClpP subunits assemble into 2 heptameric rings which stack back to back to give a disk-like structure with a central cavity, resembling the structure of eukaryotic proteasomes.

The protein localises to the cytoplasm. It catalyses the reaction Hydrolysis of proteins to small peptides in the presence of ATP and magnesium. alpha-casein is the usual test substrate. In the absence of ATP, only oligopeptides shorter than five residues are hydrolyzed (such as succinyl-Leu-Tyr-|-NHMec, and Leu-Tyr-Leu-|-Tyr-Trp, in which cleavage of the -Tyr-|-Leu- and -Tyr-|-Trp bonds also occurs).. In terms of biological role, cleaves peptides in various proteins in a process that requires ATP hydrolysis. Has a chymotrypsin-like activity. Plays a major role in the degradation of misfolded proteins. This Streptococcus salivarius protein is ATP-dependent Clp protease proteolytic subunit.